Here is a 670-residue protein sequence, read N- to C-terminus: Septation protein 7 (670 aa).

Positions 33–357 constitute a Septin-type G domain; that stretch reads KGIKFTFMVV…ETYRTERLTK (325 aa). Residues 43–50 are G1 motif; the sequence is GESGTGKT. Residues 43–50, glycine 137, 217–225, and arginine 306 contribute to the GTP site; these read GESGTGKT and KADSFTLNE. A G3 motif region spans residues 134 to 137; it reads DTPG. The interval 216–219 is G4 motif; that stretch reads GKAD. 2 disordered regions span residues 383–513 and 574–670; these read LNDS…QRNQ and LNRQ…VSNH. The span at 395 to 404 shows a compositional bias: low complexity; sequence NNNNNNNNNN. Polar residues predominate over residues 405 to 421; it reads ASTIPSMSNLAQLTTST. Low complexity-rich tracts occupy residues 433–446 and 463–473; these read SITS…KSTS and SSFTSSTSTVS. A coiled-coil region spans residues 472–606; it reads VSLEGGEKEG…SVQSGGVDDG (135 aa). Residues 476–487 show a composition bias toward basic and acidic residues; that stretch reads GGEKEGGHHDRG. A compositionally biased stretch (low complexity) spans 489–500; sequence NSTSTNNNNNNN. A compositionally biased stretch (basic and acidic residues) spans 631–645; it reads QSHEYDNSEYHHDDS.

The protein belongs to the TRAFAC class TrmE-Era-EngA-EngB-Septin-like GTPase superfamily. Septin GTPase family. Component of the septin complex which consists of CDC3, CDC10, CDC11, CDC12 and probably SEP7. The purified septin complex appeared to have a stoichiometry of 2 CDC3, 1 to 2 CDC10, 1 CDC11, 2 CDC12, and 1 or none SEP7 subunit. Induction of hyphal growth brings about important modifications in septin ring dynamics, because the rings were found in a different state from those of yeast cells. This hyphal-specific state contains a core of stable septins (SEP7, CDC3, and CDC12), and it shows a high CDC10 turnover between the ring and the cytoplasm. Interacts with GIN4. Phosphorylated by GIN4 which stabilizes the GIN4-SEP7 interaction.

The protein resides in the bud neck. Functionally, septins are GTPases involved in cytokinesis that assemble early in the cell cycle as a patch at the incipient bud site and form a ring before bud emergence, which transforms into an hour-glass shaped collar of cortical filaments that spans both sides of the mother-bud neck. This collar persists until just before cytokinesis, when it splits into two rings that occupy opposite sides of the neck. The septins at the bud neck serve as a structural scaffold that recruits different components involved in diverse processes at specific stages during the cell cycle. Many proteins bind asymmetrically to the septin collar. The septin assembly is regulated by protein kinase GIN4. Septins are also involved in cell morphogenesis, chlamydospores morphogenesis, bud site selection, chitin deposition, cell cycle regulation, cell compartmentalization and spore wall formation. SEP7 is required to convert hyphal septin rings into the hyphal-specific state and is necessary for CDC10 turnover during hyphal growth. The sequence is that of Septation protein 7 (SEP7) from Candida albicans (strain SC5314 / ATCC MYA-2876) (Yeast).